We begin with the raw amino-acid sequence, 515 residues long: ATP-dependent rRNA helicase rrp-3 (515 aa).

A disordered region spans residues 1–85; sequence MSTKRRKTSD…LDVAPEQEEV (85 aa). Positions 15–24 are enriched in low complexity; it reads LKKAAAPSAP. Residues 25–55 show a composition bias toward basic and acidic residues; sequence ELKKEKKVKDKSTKDKSSTKKTEKTEKKQDA. Over residues 69-85 the composition is skewed to acidic residues; that stretch reads TEEDSVTLDVAPEQEEV. The Q motif motif lies at 90-118; the sequence is KTFKDLGIVDALCEACERLGYKNPTPIQE. In terms of domain architecture, Helicase ATP-binding spans 121-292; the sequence is IPLALQNRDI…RASLRDPLKV (172 aa). Residue 134-141 coordinates ATP; the sequence is AETGSGKT. The short motif at 240 to 243 is the DEAD box element; it reads DEAD. In terms of domain architecture, Helicase C-terminal spans 316–464; it reads HKDTYLVYLC…EYPLEKDEVM (149 aa). The disordered stretch occupies residues 482 to 515; sequence KSLMENQGKHGGLLKRKRGNGQGGGRDHMDAEEG. The segment covering 506 to 515 has biased composition (basic and acidic residues); it reads GRDHMDAEEG.

Belongs to the DEAD box helicase family. DDX47/RRP3 subfamily.

It is found in the nucleus. Functionally, required for pre-ribosomal RNA processing. Involved in the maturation of the 35S-pre-rRNA and to its cleavage to mature 18S rRNA. This Neurospora crassa (strain ATCC 24698 / 74-OR23-1A / CBS 708.71 / DSM 1257 / FGSC 987) protein is ATP-dependent rRNA helicase rrp-3 (rrp-3).